An 861-amino-acid chain; its full sequence is APC membrane recruitment protein 3 (861 aa).

8 disordered regions span residues 1 to 77 (MELK…PKGG), 179 to 206 (AEGK…PPGE), 261 to 289 (PSLE…GPLQ), 351 to 415 (PLCP…FPRD), 514 to 558 (RGPT…GGAT), 576 to 644 (GLLA…SQKE), 716 to 742 (MLEQ…STQD), and 786 to 822 (AHGS…SQQE). The span at 362–384 (SKASSIDTGTPKSEQPESVSTSD) shows a compositional bias: polar residues. Over residues 518-530 (PRAPPTPGQPAAP) the composition is skewed to pro residues. A compositionally biased stretch (low complexity) spans 584-595 (ALGGATQGTGTL). Residues 598-609 (DASREEETRGHS) show a composition bias toward basic and acidic residues. Composition is skewed to polar residues over residues 615-629 (SMES…TSGK) and 719-730 (QKQSSSSPSMTT).

Belongs to the Amer family.

It is found in the cell membrane. Its function is as follows. Regulator of the canonical Wnt signaling pathway. Acts by specifically binding phosphatidylinositol 4,5-bisphosphate (PtdIns(4,5)P2), translocating to the cell membrane. This chain is APC membrane recruitment protein 3 (AMER3), found in Homo sapiens (Human).